A 363-amino-acid polypeptide reads, in one-letter code: MGSSFGDLFRISTFGESHGGGVGVILEGCPPRLAIDVDAIQAELDRRRPGQSKITTPRNEVDQVEILSGLVDNKTLGTPISMVVRNKDFRPNDYGEMQNIFRPSHADGTYHLKYGVQAASGGGRASARETIGRVAAGAIAKQLLRKVNQTEVLAWVKRIHTIEADVDPNSVQIKDIESNIVRCPDPKIAKLMVERIEEVSRDGDSCGGVIECIVRNPPAGLGMPVFDKLEADLAKALMSLPASKGFEIGSGFSGTFLKGSEHNDAFIPSGKGILRTATNNSGGIQGGISNGELIVLRVAFKPTATIRKDQKTVDSDGKERTLSAKGRHDPCVLPRAVPMVESMVALVLADHLLRQQGQCGLWQ.

Arginine 47 is an NADP(+) binding site. Residues 124–126 (RAS), glycine 286, 301–305 (KPTAT), and arginine 327 contribute to the FMN site.

Belongs to the chorismate synthase family. In terms of assembly, homotetramer. Requires FMNH2 as cofactor.

The enzyme catalyses 5-O-(1-carboxyvinyl)-3-phosphoshikimate = chorismate + phosphate. The protein operates within metabolic intermediate biosynthesis; chorismate biosynthesis; chorismate from D-erythrose 4-phosphate and phosphoenolpyruvate: step 7/7. Catalyzes the anti-1,4-elimination of the C-3 phosphate and the C-6 proR hydrogen from 5-enolpyruvylshikimate-3-phosphate (EPSP) to yield chorismate, which is the branch point compound that serves as the starting substrate for the three terminal pathways of aromatic amino acid biosynthesis. This reaction introduces a second double bond into the aromatic ring system. The protein is Chorismate synthase of Prochlorococcus marinus (strain MIT 9211).